The following is a 632-amino-acid chain: tRNA uridine 5-carboxymethylaminomethyl modification enzyme MnmG (632 aa).

15–20 (GAGHAG) provides a ligand contact to FAD. A disordered region spans residues 205-231 (PRVDGNTIDYSKTQEEPGDKEPRHFSY). The segment covering 216–228 (KTQEEPGDKEPRH) has biased composition (basic and acidic residues). 276–290 (GPRYCPSIEDKVVRF) provides a ligand contact to NAD(+).

This sequence belongs to the MnmG family. Homodimer. Heterotetramer of two MnmE and two MnmG subunits. Requires FAD as cofactor.

Its subcellular location is the cytoplasm. NAD-binding protein involved in the addition of a carboxymethylaminomethyl (cmnm) group at the wobble position (U34) of certain tRNAs, forming tRNA-cmnm(5)s(2)U34. This chain is tRNA uridine 5-carboxymethylaminomethyl modification enzyme MnmG, found in Lactobacillus johnsonii (strain CNCM I-12250 / La1 / NCC 533).